Reading from the N-terminus, the 631-residue chain is Polyadenylate-binding protein, cytoplasmic and nuclear (631 aa).

The segment at 1–56 (MSDLQESLEKLSINEKAPQAPADDATPSNTTTLEKESSESAAAAAGEGAGEEGEEA) is disordered. RRM domains follow at residues 58–136 (ASLY…WSQR), 146–223 (GNIF…KHVS), 239–316 (TNVY…RAQK), and 342–419 (VNLF…LAQR). The tract at residues 518 to 545 (GGEFNGPNGQRQQRGAYPPNRNQKGGRP) is disordered. A PABC domain is found at 545 to 626 (PQRDLAAIIS…ALTAFEEYKK (82 aa)).

The protein belongs to the polyadenylate-binding protein type-1 family.

It is found in the cytoplasm. The protein resides in the nucleus. Its function is as follows. Binds the poly(A) tail of mRNA. Appears to be an important mediator of the multiple roles of the poly(A) tail in mRNA biogenesis, stability and translation. In the nucleus, involved in both mRNA cleavage and polyadenylation. Is also required for efficient mRNA export to the cytoplasm. Acts in concert with a poly(A)-specific nuclease (PAN) to affect poly(A) tail shortening, which may occur concomitantly with either nucleocytoplasmic mRNA transport or translational initiation. In the cytoplasm, stimulates translation initiation and regulates mRNA decay through translation termination-coupled poly(A) shortening, probably mediated by PAN. In Meyerozyma guilliermondii (strain ATCC 6260 / CBS 566 / DSM 6381 / JCM 1539 / NBRC 10279 / NRRL Y-324) (Yeast), this protein is Polyadenylate-binding protein, cytoplasmic and nuclear (PAB1).